The primary structure comprises 130 residues: Small ribosomal subunit protein uS11 (130 aa).

This sequence belongs to the universal ribosomal protein uS11 family. As to quaternary structure, part of the 30S ribosomal subunit. Interacts with proteins S7 and S18. Binds to IF-3.

Located on the platform of the 30S subunit, it bridges several disparate RNA helices of the 16S rRNA. Forms part of the Shine-Dalgarno cleft in the 70S ribosome. This is Small ribosomal subunit protein uS11 from Prochlorococcus marinus (strain NATL1A).